Consider the following 1695-residue polypeptide: MCVLFSLLLLASVFSLGQTTWGVSSPKNVQGLSGSCLLIPCIFSYPADVPVSNGITAIWYYDYSGKRQVVIHSGDPKLVDKRFRGRAELMGNMDHKVCNLLLKDLKPEDSGTYNFRFEISDSNRWLDVKGTTVTVTTDPSPPTITIPEELREGMERNFNCSTPYLCLQEKQVSLQWRGQDPTHSVTSSFQSLEPTGVYHQTTLHMALSWQDHGRTLLCQFSLGAHSSRKEVYLQVPHAPKGVEILLSSSGRNILPGDPVTLTCRVNSSYPAVSAVQWARDGVNLGVTGHVLRLFSAAWNDSGAYTCQATNDMGSLVSSPLSLHVFMAEVKMNPAGPVLENETVTLLCSTPKEAPQELRYSWYKNHILLEDAHASTLHLPAVTRADTGFYFCEVQNAQGSERSSPLSVVVRYPPLTPDLTTFLETQAGLVGILHCSVVSEPLATVVLSHGGLTLASNSGENDFNPRFRISSAPNSLRLEIRDLQPADSGEYTCLAVNSLGNSTSSLDFYANVARLLINPSAEVVEGQAVTLSCRSGLSPAPDTRFSWYLNGALLLEGSSSSLLLPAASSTDAGSYYCRTQAGPNTSGPSLPTVLTVFYPPRKPTFTARLDLDTSGVGDGRRGILLCHVDSDPPAQLRLLHKGHVVATSLPSRCGSCSQRTKVSRTSNSLHVEIQKPVLEDEGVYLCEASNTLGNSSAAASFNAKATVLVITPSNTLREGTEANLTCNVNQEVAVSPANFSWFRNGVLWTQGSLETVRLQPVARTDAAVYACRLLTEDGAQLSAPVVLSVLYAPDPPKLSALLDVGQGHMAVFICTVDSYPLAHLSLFRGDHLLATNLEPQRPSHGRIQAKATANSLQLEVRELGLVDSGNYHCEATNILGSANSSLFFQVRGAWVQVSPSPELREGQAVVLSCQVPTGVSEGTSYSWYQDGRPLQESTSSTLRIAAISLRQAGAYHCQAQAPDTAIASLAAPVSLHVSYTPRHVTLSALLSTDPERLGHLVCSVQSDPPAQLQLFHRNRLVASTLQGADELAGSNPRLHVTVLPNELRLQIHFPELEDDGTYTCEASNTLGQASAAADFDAQAVRVTVWPNATVQEGQQVNLTCLVWSTHQDSLSYTWYKGGQQLLGARSITLPSVKVLDATSYRCGVGLPGHAPHLSRPVTLDVLHAPRNLRLTYLLETQGRQLALVLCTVDSRPPAQLTLSHGDQLVASSTEASVPNTLRLELQDPRPSNEGLYSCSAHSPLGKANTSLELLLEGVRVKMNPSGSVPEGEPVTVTCEDPAALSSALYAWFHNGHWLQEGPASSLQFLVTTRAHAGAYFCQVHDTQGTRSSRPASLQILYAPRDAVLSSFRDSRTRLMVVIQCTVDSEPPAEMVLSHNGKVLAASHERHSSASGIGHIQVARNALRLQVQDVTLGDGNTYVCTAQNTLGSISTTQRLLTETDIRVTAEPGLDVPEGTALNLSCLLPGGSGPTGNSSFTWFWNRHRLHSAPVPTLSFTPVVRAQAGLYHCRADLPTGATTSAPVMLRVLYPPKTPTLIVFVEPQGGHQGILDCRVDSEPLAILTLHRGSQLVASNQLHDAPTKPHIRVTAPPNALRVDIEELGPSNQGEYVCTASNTLGSASASAYFGTRALHQLQLFQRLLWVLGFLAGFLCLLLGLVAYHTWRKKSSTKLNEDENSAEMATKKNTIQEEVVAAL.

The signal sequence occupies residues 1–19 (MCVLFSLLLLASVFSLGQT). An Ig-like V-type domain is found at 20–136 (TWGVSSPKNV…DVKGTTVTVT (117 aa)). Residues 20 to 1639 (TWGVSSPKNV…ALHQLQLFQR (1620 aa)) lie on the Extracellular side of the membrane. 4 disulfides stabilise this stretch: C36–C166, C41–C98, C160–C218, and C263–C306. N-acetylneuraminate is bound by residues Y63, R116, and 122-126 (SNRWL). Ig-like C2-type domains are found at residues 153 to 235 (GMER…YLQV), 239 to 321 (PKGV…SPLS), 326 to 406 (MAEV…SPLS), 416 to 508 (PDLT…LDFY), 509 to 594 (ANVA…TVLT), 602 to 701 (PTFT…ASFN), 704 to 781 (ATVL…AQLS), 795 to 890 (PKLS…FQVR), 894 to 973 (VQVS…APVS), 980 to 1079 (PRHV…ADFD), 1081 to 1161 (QAVR…RPVT), 1172 to 1264 (RLTY…MNPS), 1245 to 1337 (KANT…ASLQ), 1342 to 1439 (PRDA…RLLT), 1442 to 1520 (DIRV…ATTS), and 1534 to 1627 (PTLI…AYFG). N159 carries an N-linked (GlcNAc...) asparagine glycan. N-linked (GlcNAc...) asparagine glycosylation is found at N266, N299, and N340. 2 disulfides stabilise this stretch: C347–C391 and C434–C492. N-linked (GlcNAc...) asparagine glycosylation is present at N500. C532 and C576 form a disulfide bridge. Residue N583 is glycosylated (N-linked (GlcNAc...) asparagine). The cysteines at positions 625 and 685 are disulfide-linked. N-linked (GlcNAc...) asparagine glycosylation is found at N693, N722, and N737. Intrachain disulfides connect C725/C770 and C813/C872. The Cell attachment site motif lies at 827–829 (RGD). N-linked (GlcNAc...) asparagine glycosylation occurs at N882. Cystine bridges form between C912–C956 and C1001–C1063. N-linked (GlcNAc...) asparagine glycosylation is found at N1090 and N1100. Disulfide bonds link C1103–C1145 and C1189–C1237. Residue N1247 is glycosylated (N-linked (GlcNAc...) asparagine). Cystine bridges form between C1277/C1320 and C1363/C1422. N-linked (GlcNAc...) asparagine glycans are attached at residues N1460 and N1474. Intrachain disulfides connect C1463/C1509 and C1552/C1611. The chain crosses the membrane as a helical span at residues 1640 to 1660 (LLWVLGFLAGFLCLLLGLVAY). Residues 1661-1695 (HTWRKKSSTKLNEDENSAEMATKKNTIQEEVVAAL) lie on the Cytoplasmic side of the membrane.

The protein belongs to the immunoglobulin superfamily. SIGLEC (sialic acid binding Ig-like lectin) family. As to quaternary structure, interacts with CLEC10A. Detected in lymph node in the subcapsular sinus, interfollicular regions, and T and B-cell boundary (at protein level). Expressed by macrophages in various tissues. Highest expression in spleen and lymph node with lower amounts in lung, liver, bone marrow, heart and skin. No expression in thymus, kidney, brain or small intestine.

It is found in the cell membrane. The protein resides in the secreted. Macrophage-restricted adhesion molecule that mediates sialic-acid dependent binding to lymphocytes, including granulocytes, monocytes, natural killer cells, B-cells and CD8 T-cells. Plays a crucial role in limiting bacterial dissemination by engaging sialylated bacteria to promote effective phagocytosis and antigen presentation for the adaptive immune response. Mediates the uptake of various enveloped viruses via sialic acid recognition and subsequently induces the formation of intracellular compartments filled with virions (VCCs). In turn, enhances macrophage-to-T-cell transmission of several viruses including murine leukemia virus. Acts as an endocytic receptor mediating clathrin dependent endocytosis. Preferentially binds to alpha-2,3-linked sialic acid. Binds to SPN/CD43 on T-cells. May play a role in hemopoiesis. Plays a role in the inhibition of antiviral innate immune by promoting TBK1 degradation via TYROBP and TRIM27-mediated ubiquitination. This chain is Sialoadhesin (Siglec1), found in Mus musculus (Mouse).